We begin with the raw amino-acid sequence, 461 residues long: Integrator complex subunit 12 (461 aa).

The disordered stretch occupies residues 42 to 131; sequence GIDSSYRPTQ…PETRSSPITV (90 aa). K68 is covalently cross-linked (Glycyl lysine isopeptide (Lys-Gly) (interchain with G-Cter in SUMO2)). Basic and acidic residues predominate over residues 88-124; sequence TAEKIKKEAEKRPADKMKDVTEGIDVPKKPRLEKPET. S127 bears the Phosphoserine mark. Residues 158-214 form a PHD-type zinc finger; sequence GLACVVCRQMTVASGNQLVECQECHNLYHQDCHKPQVTDKEVNDPRLVWYCARCTRQ. A Glycyl lysine isopeptide (Lys-Gly) (interchain with G-Cter in SUMO2) cross-link involves residue K253. Residues 302-328 show a composition bias toward polar residues; the sequence is AGPSTAKLNSAAQNSSGKPAASSSNQK. The tract at residues 302 to 443 is disordered; sequence AGPSTAKLNS…PTSQESQLNA (142 aa). Low complexity-rich tracts occupy residues 348–357 and 381–436; these read GSGNSTSPSV and VSKV…GPTS.

It belongs to the Integrator subunit 12 family. In terms of assembly, component of the Integrator complex, composed of core subunits INTS1, INTS2, INTS3, INTS4, INTS5, INTS6, INTS7, INTS8, INTS9/RC74, INTS10, INTS11/CPSF3L, INTS12, INTS13, INTS14 and INTS15. The core complex associates with protein phosphatase 2A subunits PPP2CA and PPP2R1A, to form the Integrator-PP2A (INTAC) complex. Post-translationally, dephosphorylated at Ser-127 by the PNUTS-PP1 complex, promoting RNA polymerase II transcription pause-release.

Its subcellular location is the nucleus. Component of the integrator complex, a multiprotein complex that terminates RNA polymerase II (Pol II) transcription in the promoter-proximal region of genes. The integrator complex provides a quality checkpoint during transcription elongation by driving premature transcription termination of transcripts that are unfavorably configured for transcriptional elongation: the complex terminates transcription by (1) catalyzing dephosphorylation of the C-terminal domain (CTD) of Pol II subunit POLR2A/RPB1 and SUPT5H/SPT5, (2) degrading the exiting nascent RNA transcript via endonuclease activity and (3) promoting the release of Pol II from bound DNA. The integrator complex is also involved in terminating the synthesis of non-coding Pol II transcripts, such as enhancer RNAs (eRNAs), small nuclear RNAs (snRNAs), telomerase RNAs and long non-coding RNAs (lncRNAs). Mediates recruitment of cytoplasmic dynein to the nuclear envelope, probably as component of the integrator complex. In Mus musculus (Mouse), this protein is Integrator complex subunit 12 (Ints12).